Here is an 888-residue protein sequence, read N- to C-terminus: Translation initiation factor IF-2 (888 aa).

2 disordered regions span residues 96 to 122 (TTKQ…EAPE) and 158 to 302 (ELKE…SAPT). Composition is skewed to basic and acidic residues over residues 98-114 (KQDE…EDVS) and 158-167 (ELKEKQEKRR). Positions 181–206 (TQVQEPGSETAAVSGSVAATQPESTE) are enriched in polar residues. A compositionally biased stretch (low complexity) spans 207–225 (TAAVTPSATITVTTQTTPA). Composition is skewed to basic and acidic residues over residues 226-243 (AKER…EKGE) and 253-269 (EAWK…KARG). One can recognise a tr-type G domain in the interval 390-559 (SRAPVVTVMG…LLQAEVLELK (170 aa)). The G1 stretch occupies residues 399 to 406 (GHVDHGKT). 399 to 406 (GHVDHGKT) provides a ligand contact to GTP. The G2 stretch occupies residues 424–428 (GITQH). The tract at residues 445 to 448 (DTPG) is G3. Residues 445 to 449 (DTPGH) and 499 to 502 (NKMD) contribute to the GTP site. The G4 stretch occupies residues 499 to 502 (NKMD). The G5 stretch occupies residues 535–537 (SAK).

This sequence belongs to the TRAFAC class translation factor GTPase superfamily. Classic translation factor GTPase family. IF-2 subfamily.

It is found in the cytoplasm. Functionally, one of the essential components for the initiation of protein synthesis. Protects formylmethionyl-tRNA from spontaneous hydrolysis and promotes its binding to the 30S ribosomal subunits. Also involved in the hydrolysis of GTP during the formation of the 70S ribosomal complex. This Nitrosomonas eutropha (strain DSM 101675 / C91 / Nm57) protein is Translation initiation factor IF-2.